A 396-amino-acid polypeptide reads, in one-letter code: tRNA (guanine(9)-N1)-methyltransferase (396 aa).

Composition is skewed to basic and acidic residues over residues 1-18 (MEDD…HDEV) and 52-73 (DRID…HGKD). Positions 1–109 (MEDDDRPRKY…KVKRKEKLVA (109 aa)) are disordered. Residues 139–357 (TQKKFQRSTL…QVIPQRKGGK (219 aa)) enclose the SAM-dependent MTase TRM10-type domain. Residues 264–265 (LS), glycine 284, 288–292 (DKNRH), cysteine 296, leucine 310, and 322–324 (QVL) contribute to the S-adenosyl-L-methionine site. The Proton acceptor role is filled by aspartate 288. Positions 354-396 (KGGKLKSADHESEDQTPRESVEAVEAEPDGEGAAAEAGEGGKE) are disordered. Residues 359 to 374 (KSADHESEDQTPRESV) show a composition bias toward basic and acidic residues.

The protein belongs to the class IV-like SAM-binding methyltransferase superfamily. TRM10 family. In terms of assembly, monomer.

The protein localises to the cytoplasm. It localises to the nucleus. It carries out the reaction guanosine(9) in tRNA + S-adenosyl-L-methionine = N(1)-methylguanosine(9) in tRNA + S-adenosyl-L-homocysteine + H(+). Functionally, S-adenosyl-L-methionine-dependent guanine N(1)-methyltransferase that catalyzes the formation of N(1)-methylguanine at position 9 (m1G9) in cytoplasmic tRNA. The protein is tRNA (guanine(9)-N1)-methyltransferase of Aspergillus fumigatus (strain ATCC MYA-4609 / CBS 101355 / FGSC A1100 / Af293) (Neosartorya fumigata).